Consider the following 210-residue polypeptide: Probable GTP-binding protein EngB (210 aa).

In terms of domain architecture, EngB-type G spans 25-199 (CGIEVAFAGR…RQKLDSWFSE (175 aa)). GTP contacts are provided by residues 33-40 (GRSNAGKS), 60-64 (GRTQL), 78-81 (DLPG), 145-148 (TKAD), and 178-180 (FSS). Mg(2+)-binding residues include Ser-40 and Thr-62.

The protein belongs to the TRAFAC class TrmE-Era-EngA-EngB-Septin-like GTPase superfamily. EngB GTPase family. Requires Mg(2+) as cofactor.

Necessary for normal cell division and for the maintenance of normal septation. The protein is Probable GTP-binding protein EngB of Salmonella dublin (strain CT_02021853).